We begin with the raw amino-acid sequence, 144 residues long: Aspartate carbamoyltransferase regulatory chain (144 aa).

Positions 103, 108, 132, and 135 each coordinate Zn(2+).

It belongs to the PyrI family. In terms of assembly, contains catalytic and regulatory chains. Zn(2+) is required as a cofactor.

Its function is as follows. Involved in allosteric regulation of aspartate carbamoyltransferase. The chain is Aspartate carbamoyltransferase regulatory chain from Clostridium tetani (strain Massachusetts / E88).